Consider the following 1389-residue polypeptide: DNA-directed RNA polymerase subunit beta'' (1389 aa).

4 residues coordinate Zn(2+): C220, C290, C297, and C300.

The protein belongs to the RNA polymerase beta' chain family. RpoC2 subfamily. As to quaternary structure, in plastids the minimal PEP RNA polymerase catalytic core is composed of four subunits: alpha, beta, beta', and beta''. When a (nuclear-encoded) sigma factor is associated with the core the holoenzyme is formed, which can initiate transcription. Zn(2+) serves as cofactor.

It is found in the plastid. Its subcellular location is the chloroplast. It carries out the reaction RNA(n) + a ribonucleoside 5'-triphosphate = RNA(n+1) + diphosphate. Functionally, DNA-dependent RNA polymerase catalyzes the transcription of DNA into RNA using the four ribonucleoside triphosphates as substrates. This is DNA-directed RNA polymerase subunit beta'' from Chloranthus spicatus (Chulantree).